Consider the following 208-residue polypeptide: Large ribosomal subunit protein uL4 (208 aa).

Residues Arg-54–Ser-78 form a disordered region.

The protein belongs to the universal ribosomal protein uL4 family. In terms of assembly, part of the 50S ribosomal subunit.

Its function is as follows. One of the primary rRNA binding proteins, this protein initially binds near the 5'-end of the 23S rRNA. It is important during the early stages of 50S assembly. It makes multiple contacts with different domains of the 23S rRNA in the assembled 50S subunit and ribosome. In terms of biological role, forms part of the polypeptide exit tunnel. The sequence is that of Large ribosomal subunit protein uL4 from Methylobacillus flagellatus (strain ATCC 51484 / DSM 6875 / VKM B-1610 / KT).